Consider the following 336-residue polypeptide: Foldase protein PrsA (336 aa).

Positions 1-22 (MKSAKKLLSVLCLGIFILTFTA) are cleaved as a signal peptide. Cys-23 is lipidated: N-palmitoyl cysteine. Cys-23 carries the S-diacylglycerol cysteine lipid modification. The PpiC domain maps to 194 to 286 (PNTMNVSHIL…WGYHIIKINS (93 aa)).

This sequence belongs to the PrsA family.

Its subcellular location is the cell membrane. The enzyme catalyses [protein]-peptidylproline (omega=180) = [protein]-peptidylproline (omega=0). In terms of biological role, plays a major role in protein secretion by helping the post-translocational extracellular folding of several secreted proteins. The chain is Foldase protein PrsA from Clostridium botulinum (strain Langeland / NCTC 10281 / Type F).